The chain runs to 446 residues: uncharacterized protein (446 aa).

3 disordered regions span residues 198–233 (SIQK…ENYS), 309–337 (NEDN…DDSK), and 394–431 (SESV…FGNT). Over residues 199–224 (IQKQIPKQTQEQTQKQTQEQTQESSQ) the composition is skewed to low complexity. The segment covering 317–333 (DNEEDSDESDIESDSDL) has biased composition (acidic residues). Residues 397 to 418 (VKSDSNESKSIKPESIKSESIK) are compositionally biased toward basic and acidic residues.

This is an uncharacterized protein from Acanthamoeba polyphaga mimivirus (APMV).